The primary structure comprises 937 residues: Alanine--tRNA ligase (937 aa).

Residues His-626, His-630, Cys-727, and His-731 each coordinate Zn(2+).

The protein belongs to the class-II aminoacyl-tRNA synthetase family. It depends on Zn(2+) as a cofactor.

It localises to the cytoplasm. It catalyses the reaction tRNA(Ala) + L-alanine + ATP = L-alanyl-tRNA(Ala) + AMP + diphosphate. In terms of biological role, catalyzes the attachment of alanine to tRNA(Ala) in a two-step reaction: alanine is first activated by ATP to form Ala-AMP and then transferred to the acceptor end of tRNA(Ala). Also edits incorrectly charged Ser-tRNA(Ala) and Gly-tRNA(Ala) via its editing domain. The chain is Alanine--tRNA ligase from Opitutus terrae (strain DSM 11246 / JCM 15787 / PB90-1).